The chain runs to 95 residues: Aspartyl/glutamyl-tRNA(Asn/Gln) amidotransferase subunit C (95 aa).

This sequence belongs to the GatC family. Heterotrimer of A, B and C subunits.

The catalysed reaction is L-glutamyl-tRNA(Gln) + L-glutamine + ATP + H2O = L-glutaminyl-tRNA(Gln) + L-glutamate + ADP + phosphate + H(+). The enzyme catalyses L-aspartyl-tRNA(Asn) + L-glutamine + ATP + H2O = L-asparaginyl-tRNA(Asn) + L-glutamate + ADP + phosphate + 2 H(+). In terms of biological role, allows the formation of correctly charged Asn-tRNA(Asn) or Gln-tRNA(Gln) through the transamidation of misacylated Asp-tRNA(Asn) or Glu-tRNA(Gln) in organisms which lack either or both of asparaginyl-tRNA or glutaminyl-tRNA synthetases. The reaction takes place in the presence of glutamine and ATP through an activated phospho-Asp-tRNA(Asn) or phospho-Glu-tRNA(Gln). The polypeptide is Aspartyl/glutamyl-tRNA(Asn/Gln) amidotransferase subunit C (Chelativorans sp. (strain BNC1)).